The primary structure comprises 339 residues: Annexin A2 (339 aa).

Ser-2 is modified (N-acetylserine). The S100A10-binding site stretch occupies residues 2–24 (STVHEILCKLSLEGDHSTPPSAY). At Tyr-24 the chain carries Phosphotyrosine; by SRC. At Ser-26 the chain carries Phosphoserine; by PKC. Annexin repeat units follow at residues 33–104 (FDAE…GLLK) and 105–176 (TPAQ…ALAK). Residue Lys-49 is modified to N6-acetyllysine; alternate. Lys-49 participates in a covalent cross-link: Glycyl lysine isopeptide (Lys-Gly) (interchain with G-Cter in SUMO1); alternate. Lys-49 is covalently cross-linked (Glycyl lysine isopeptide (Lys-Gly) (interchain with G-Cter in SUMO2); alternate). At Lys-152 the chain carries N6-acetyllysine. Ser-184 is modified (phosphoserine). 2 Annexin repeats span residues 189–261 (ELID…NLVQ) and 265–336 (NKPL…YLCG). Position 199 is a phosphotyrosine (Tyr-199). Residue Lys-227 is modified to N6-acetyllysine.

The protein belongs to the annexin family. In terms of assembly, heterotetramer containing 2 light chains of S100A10/p11 and 2 heavy chains of ANXA2/p36. Interacts with ATP1B1. Interacts with DYSF. Interacts with COCH. Interacts (via repeat Annexin 1) with PCSK9 (via the C-terminal domain); the interaction inhibits the degradation of LDLR. Interacts with CEACAM1 (via the cytoplasmic domain); this interaction is regulated by phosphorylation of CEACAM1. Interacts with APPL2 and APPL1; targets APPL2 to endosomes and acting in parallel to RAB5A. Interacts with S100A4. May interact with UBAP2. Interacts with PLEKHG4B; this interaction is required for PLEKHG4B localization to cell-cell adhesions. Interacts with FAM13A. Interacts with salivary cystatin-L2 (via loop 2) from the tick Ixodes scapularis; the interaction results in reduced activation of mouse NLRC4 inflammasome formation upon Anaplasma phagocytophilum infection. In terms of processing, ISGylated.

The protein localises to the secreted. The protein resides in the extracellular space. It is found in the extracellular matrix. Its subcellular location is the basement membrane. It localises to the melanosome. The protein localises to the early endosome. Calcium-regulated membrane-binding protein whose affinity for calcium is greatly enhanced by anionic phospholipids. It binds two calcium ions with high affinity. May be involved in heat-stress response. Inhibits PCSK9-enhanced LDLR degradation, probably reduces PCSK9 protein levels via a translational mechanism but also competes with LDLR for binding with PCSK9. Binds to endosomes damaged by phagocytosis of particulate wear debris and participates in endosomal membrane stabilization, thereby limiting NLRP3 inflammasome activation. Required for endothelial cell surface plasmin generation and may support fibrinolytic surveillance and neoangiogenesis. Its function is as follows. (Microbial infection) Regulates the formation of the NLRC4 inflammasome triggered by Anaplasma phagocytophilum infection. In terms of biological role, (Microbial infection) Protects against Klebsiella pneumoniae infection. Attenuates bacteria-induced pulmonary inflammation and promotes intro-abdominal pathogen clearance. Promotes anti-inflammatory responses by facilitating TLR4 internalization and translocation into early endosomal membranes; this leads to activation of TRAM-dependent endosomal signaling and release of anti-inflammatory cytokines. Functionally, (Microbial infection) Promotes macrophage phagocytic efficiency towards Cryptococcus neoformans and ability to control fungal infection inside the cells. (Microbial infection) Contributes to protection against Pseudomonas aeruginosa infection by regulating autophagy via the AKT1-mTOR-ULK1/2 signaling pathway and activation of Rho GTPases via FAM13A-mediated mechanism. In Mus musculus (Mouse), this protein is Annexin A2 (Anxa2).